We begin with the raw amino-acid sequence, 573 residues long: O-fucosyltransferase 20 (573 aa).

Residues 1-60 (MALSKNSNSNSFNKKKVSYISVPSQIINSLSSSSLQSLLVSPKKSSRSTNRFSFSYRNPR) are Cytoplasmic-facing. A helical; Signal-anchor for type II membrane protein transmembrane segment spans residues 61 to 81 (IWFFTLFLVSLFGMLKLGFNV). The Lumenal portion of the chain corresponds to 82 to 573 (DPISLPFSRY…RQQQEQQSDA (492 aa)). N138 carries N-linked (GlcNAc...) asparagine glycosylation. 344 to 346 (HLR) contributes to the substrate binding site. Residues N385 and N517 are each glycosylated (N-linked (GlcNAc...) asparagine). The segment covering 547-556 (AGKDVTKHPV) has biased composition (basic and acidic residues). Residues 547–573 (AGKDVTKHPVPECMCSDRQQQEQQSDA) are disordered. Residues 563–573 (DRQQQEQQSDA) show a composition bias toward polar residues.

It belongs to the glycosyltransferase GT106 family. Interacts with RACK1A. As to expression, highly expressed in shoot apical meristem (SAM) and in young vegetative tissues.

The protein localises to the golgi apparatus membrane. It functions in the pathway glycan metabolism. In terms of biological role, may play a role in the biosynthesis of matrix polysaccharides and contribute to the biomechanics and development of the plant cell wall. This is O-fucosyltransferase 20 from Arabidopsis thaliana (Mouse-ear cress).